Here is a 355-residue protein sequence, read N- to C-terminus: 3'-5' exonuclease (355 aa).

The segment at 1–119 is disordered; the sequence is MDKFLIKMPI…TPSPEKVKPE (119 aa). 2 stretches are compositionally biased toward basic and acidic residues: residues 13–29 and 71–91; these read KNNE…KETP and KNLD…ENPP. Phosphoserine is present on residues S104 and S112. The 3'-5' exonuclease domain occupies 154–315; that stretch reads TDVDVVPMAF…GQVIYRDLEQ (162 aa). The Mg(2+) site is built by D164, E166, and D302.

The protein belongs to the WRNexo family.

It localises to the nucleus. Its function is as follows. Has exonuclease activity on both single-stranded and duplex templates bearing overhangs, but not blunt ended duplex DNA, and cleaves in a 3'-5' direction. Essential for the formation of DNA replication focal centers. Has an important role in maintaining genome stability. This Drosophila persimilis (Fruit fly) protein is 3'-5' exonuclease.